Consider the following 150-residue polypeptide: Large ribosomal subunit protein bL9 (150 aa).

It belongs to the bacterial ribosomal protein bL9 family.

Functionally, binds to the 23S rRNA. In Alkalilimnicola ehrlichii (strain ATCC BAA-1101 / DSM 17681 / MLHE-1), this protein is Large ribosomal subunit protein bL9.